The chain runs to 441 residues: Arginine biosynthesis bifunctional protein ArgJ, mitochondrial (441 aa).

The substrate site is built by Thr-178, Lys-204, Thr-215, Glu-304, Asn-436, and Ser-441. Thr-215 acts as the Nucleophile in catalysis.

The protein belongs to the ArgJ family. As to quaternary structure, heterodimer of an alpha and a beta chain. The alpha and beta chains are autoproteolytically processed from a single precursor protein within the mitochondrion.

It is found in the mitochondrion matrix. The enzyme catalyses N(2)-acetyl-L-ornithine + L-glutamate = N-acetyl-L-glutamate + L-ornithine. It carries out the reaction L-glutamate + acetyl-CoA = N-acetyl-L-glutamate + CoA + H(+). The protein operates within amino-acid biosynthesis; L-arginine biosynthesis; L-ornithine and N-acetyl-L-glutamate from L-glutamate and N(2)-acetyl-L-ornithine (cyclic): step 1/1. It participates in amino-acid biosynthesis; L-arginine biosynthesis; N(2)-acetyl-L-ornithine from L-glutamate: step 1/4. Functionally, catalyzes two activities which are involved in the cyclic version of arginine biosynthesis: the synthesis of acetylglutamate from glutamate and acetyl-CoA, and of ornithine by transacetylation between acetylornithine and glutamate. The sequence is that of Arginine biosynthesis bifunctional protein ArgJ, mitochondrial from Lodderomyces elongisporus (strain ATCC 11503 / CBS 2605 / JCM 1781 / NBRC 1676 / NRRL YB-4239) (Yeast).